Consider the following 242-residue polypeptide: Transcription factor TCP17 (242 aa).

Positions 33–91 (GKDRHSKVCTVRGLRDRRIRLSVMTAIQVYDLQERLGLSQPSKVIDWLLEVAKNDVDLL) constitute a TCP domain.

Interacts with SPL. Expressed in cotyledons, particularly in the vascular region, in leaves, roots, stems, buds, flowers and siliques.

It localises to the nucleus. Functionally, plays a pivotal role in the control of morphogenesis of shoot organs by negatively regulating the expression of boundary-specific genes such as CUC genes, probably through the induction of miRNA (e.g. miR164). Participates in ovule development. The chain is Transcription factor TCP17 (TCP17) from Arabidopsis thaliana (Mouse-ear cress).